The following is a 563-amino-acid chain: Arginine--tRNA ligase (563 aa).

The 'HIGH' region signature appears at 121-131 (PNIAKPFSIGH).

This sequence belongs to the class-I aminoacyl-tRNA synthetase family. As to quaternary structure, monomer.

It is found in the cytoplasm. It catalyses the reaction tRNA(Arg) + L-arginine + ATP = L-arginyl-tRNA(Arg) + AMP + diphosphate. This is Arginine--tRNA ligase from Streptococcus pneumoniae (strain CGSP14).